The sequence spans 559 residues: Dihydroxy-acid dehydratase (559 aa).

Cys52 serves as a coordination point for [2Fe-2S] cluster. Position 84 (Asp84) interacts with Mg(2+). Position 125 (Cys125) interacts with [2Fe-2S] cluster. Mg(2+) is bound by residues Asp126 and Lys127. Lys127 carries the post-translational modification N6-carboxylysine. Cys197 provides a ligand contact to [2Fe-2S] cluster. Residue Glu447 coordinates Mg(2+). Ser473 serves as the catalytic Proton acceptor.

The protein belongs to the IlvD/Edd family. Homodimer. [2Fe-2S] cluster serves as cofactor. Requires Mg(2+) as cofactor.

The catalysed reaction is (2R)-2,3-dihydroxy-3-methylbutanoate = 3-methyl-2-oxobutanoate + H2O. It catalyses the reaction (2R,3R)-2,3-dihydroxy-3-methylpentanoate = (S)-3-methyl-2-oxopentanoate + H2O. The protein operates within amino-acid biosynthesis; L-isoleucine biosynthesis; L-isoleucine from 2-oxobutanoate: step 3/4. Its pathway is amino-acid biosynthesis; L-valine biosynthesis; L-valine from pyruvate: step 3/4. Functionally, functions in the biosynthesis of branched-chain amino acids. Catalyzes the dehydration of (2R,3R)-2,3-dihydroxy-3-methylpentanoate (2,3-dihydroxy-3-methylvalerate) into 2-oxo-3-methylpentanoate (2-oxo-3-methylvalerate) and of (2R)-2,3-dihydroxy-3-methylbutanoate (2,3-dihydroxyisovalerate) into 2-oxo-3-methylbutanoate (2-oxoisovalerate), the penultimate precursor to L-isoleucine and L-valine, respectively. The sequence is that of Dihydroxy-acid dehydratase from Roseiflexus sp. (strain RS-1).